A 61-amino-acid polypeptide reads, in one-letter code: MARYRHSRSRSRSXYRRRXRRRSRYRSRRRRYRGRRRRRSRRGRRRGYSRRRYSRRRRRRY.

The segment at 1 to 61 is disordered; it reads MARYRHSRSR…RYSRRRRRRY (61 aa).

Belongs to the protamine P1 family. As to expression, testis.

The protein resides in the nucleus. It localises to the chromosome. In terms of biological role, protamines substitute for histones in the chromatin of sperm during the haploid phase of spermatogenesis. They compact sperm DNA into a highly condensed, stable and inactive complex. The polypeptide is Sperm protamine P1 (PRM1) (Onychogalea fraenata (Bridled nail-tailed wallaby)).